Consider the following 185-residue polypeptide: Acireductone dioxygenase (185 aa).

4 residues coordinate Fe(2+): His96, His98, Glu102, and His140. Ni(2+) contacts are provided by His96, His98, Glu102, and His140.

Belongs to the acireductone dioxygenase (ARD) family. As to quaternary structure, monomer. Fe(2+) is required as a cofactor. The cofactor is Ni(2+).

It carries out the reaction 1,2-dihydroxy-5-(methylsulfanyl)pent-1-en-3-one + O2 = 3-(methylsulfanyl)propanoate + CO + formate + 2 H(+). The enzyme catalyses 1,2-dihydroxy-5-(methylsulfanyl)pent-1-en-3-one + O2 = 4-methylsulfanyl-2-oxobutanoate + formate + 2 H(+). It functions in the pathway amino-acid biosynthesis; L-methionine biosynthesis via salvage pathway; L-methionine from S-methyl-5-thio-alpha-D-ribose 1-phosphate: step 5/6. In terms of biological role, catalyzes 2 different reactions between oxygen and the acireductone 1,2-dihydroxy-3-keto-5-methylthiopentene (DHK-MTPene) depending upon the metal bound in the active site. Fe-containing acireductone dioxygenase (Fe-ARD) produces formate and 2-keto-4-methylthiobutyrate (KMTB), the alpha-ketoacid precursor of methionine in the methionine recycle pathway. Ni-containing acireductone dioxygenase (Ni-ARD) produces methylthiopropionate, carbon monoxide and formate, and does not lie on the methionine recycle pathway. The polypeptide is Acireductone dioxygenase (Hahella chejuensis (strain KCTC 2396)).